The sequence spans 158 residues: Endoribonuclease YbeY (158 aa).

H118, H122, and H128 together coordinate Zn(2+).

This sequence belongs to the endoribonuclease YbeY family. Zn(2+) serves as cofactor.

The protein resides in the cytoplasm. Functionally, single strand-specific metallo-endoribonuclease involved in late-stage 70S ribosome quality control and in maturation of the 3' terminus of the 16S rRNA. The sequence is that of Endoribonuclease YbeY from Bartonella bacilliformis (strain ATCC 35685 / KC583 / Herrer 020/F12,63).